A 747-amino-acid chain; its full sequence is Polyribonucleotide nucleotidyltransferase (747 aa).

Positions 487 and 493 each coordinate Mg(2+). The KH domain occupies 554–613; sequence PSTTTIKIDKDKIRDIIGPGGKVIKEICETSGAKIDISDDGSVSVYASDRDKLKVALDKI. Residues 623 to 691 form the S1 motif domain; it reads GEIFNGTVMK…NKGKAKLTIK (69 aa). The tract at residues 691–747 is disordered; that stretch reads KNADKDKSSNNPKPKNNVNNAKENSEPERRDSSKKRAWNEDSNNDKEEAITERKYFN. Residues 699–712 are compositionally biased toward low complexity; that stretch reads SNNPKPKNNVNNAK. The span at 727 to 747 shows a compositional bias: basic and acidic residues; the sequence is AWNEDSNNDKEEAITERKYFN.

The protein belongs to the polyribonucleotide nucleotidyltransferase family. Requires Mg(2+) as cofactor.

The protein resides in the cytoplasm. It carries out the reaction RNA(n+1) + phosphate = RNA(n) + a ribonucleoside 5'-diphosphate. In terms of biological role, involved in mRNA degradation. Catalyzes the phosphorolysis of single-stranded polyribonucleotides processively in the 3'- to 5'-direction. The polypeptide is Polyribonucleotide nucleotidyltransferase (Rickettsia felis (strain ATCC VR-1525 / URRWXCal2) (Rickettsia azadi)).